Here is a 187-residue protein sequence, read N- to C-terminus: CASP-like protein 3A2 (187 aa).

Over 1–24 (MTSNGEGGEVVAKRRRKGIKELVQ) the chain is Cytoplasmic. A helical transmembrane segment spans residues 25–45 (VALRGGCLAASATAMAVMLTA). Residues 46–71 (TEEGVADIYGFKLTLSSNWSFSPSYQ) lie on the Extracellular side of the membrane. Residue N63 is glycosylated (N-linked (GlcNAc...) asparagine). The helical transmembrane segment at 72–92 (YVVGACAGTVLYSLLQLCLGV) threads the bilayer. Residues 93–107 (YRLVTGSPITPSRFQ) are Cytoplasmic-facing. Residues 108–128 (AWLCFTSDQLFCYLMMSAGSA) form a helical membrane-spanning segment. The Extracellular portion of the chain corresponds to 129–162 (GSGVTNLNKTGIRHTPLPDFCKTLSSFCNHVALS). N136 carries N-linked (GlcNAc...) asparagine glycosylation. The chain crosses the membrane as a helical span at residues 163–183 (LLLVFLSFIFLASSSFFTVLV). Residues 184–187 (LSTP) are Cytoplasmic-facing.

It belongs to the Casparian strip membrane proteins (CASP) family. Homodimer and heterodimers.

The protein localises to the cell membrane. The protein is CASP-like protein 3A2 of Arabidopsis thaliana (Mouse-ear cress).